A 159-amino-acid polypeptide reads, in one-letter code: Large ribosomal subunit protein uL10 (159 aa).

Belongs to the universal ribosomal protein uL10 family. Part of the ribosomal stalk of the 50S ribosomal subunit. The N-terminus interacts with L11 and the large rRNA to form the base of the stalk. The C-terminus forms an elongated spine to which L12 dimers bind in a sequential fashion forming a multimeric L10(L12)X complex.

In terms of biological role, forms part of the ribosomal stalk, playing a central role in the interaction of the ribosome with GTP-bound translation factors. In Nautilia profundicola (strain ATCC BAA-1463 / DSM 18972 / AmH), this protein is Large ribosomal subunit protein uL10.